The sequence spans 385 residues: Rhomboid domain-containing protein 3 (385 aa).

The next 5 helical transmembrane spans lie at 13-33 (ALPLASSVLMLLLSCLWLLGA), 58-78 (LGHTALPGLLLSLLLLPTLGW), 95-115 (VLALATGLLAVLLAGLGVSGA), 146-166 (WLLPWLLLALTLLLSSEPPFL), and 168-188 (LLCGLLTGLAYAAGAFQWLEL). A disordered region spans residues 238–264 (PPYLASSDSWPHSDGSAQLPPRLGPGQ). A UBA domain is found at 322–361 (SVSSLRLQQLQHMGFPTEQAAVALAATGRVEGAVSLLVEG).

Its subcellular location is the membrane. The chain is Rhomboid domain-containing protein 3 (Rhbdd3) from Mus musculus (Mouse).